We begin with the raw amino-acid sequence, 148 residues long: Single-stranded DNA-binding protein, mitochondrial (148 aa).

The N-terminal 16 residues, 1-16, are a transit peptide targeting the mitochondrion; it reads MFRRPVVQVLRQFVRH. One can recognise an SSB domain in the interval 30-141; that stretch reads LNRVQLLGRV…IIADNIIFLS (112 aa). Phosphoserine occurs at positions 67 and 79. At Lys113 the chain carries N6-acetyllysine. Lys122 is modified (N6-succinyllysine).

As to quaternary structure, homotetramer. Interacts with MPG/AAG, through inhibition of its glycosylase activity it potentially prevents formation of DNA breaks in ssDNA, ensuring that base removal primarily occurs in dsDNA. Interacts with POLDIP2. Interacts with PRIMPOL.

The protein resides in the mitochondrion. It localises to the mitochondrion matrix. The protein localises to the mitochondrion nucleoid. Functionally, binds preferentially and cooperatively to pyrimidine rich single-stranded DNA (ss-DNA). In vitro, required to maintain the copy number of mitochondrial DNA (mtDNA) and plays a crucial role during mtDNA replication by stimulating the activity of the replisome components POLG and TWNK at the replication fork. Promotes the activity of the gamma complex polymerase POLG, largely by organizing the template DNA and eliminating secondary structures to favor ss-DNA conformations that facilitate POLG activity. In addition it is able to promote the 5'-3' unwinding activity of the mtDNA helicase TWNK. May also function in mtDNA repair. The sequence is that of Single-stranded DNA-binding protein, mitochondrial (SSBP1) from Bos taurus (Bovine).